The chain runs to 254 residues: Acetylglutamate kinase (254 aa).

Substrate-binding positions include G40 to G41, R62, and N158.

This sequence belongs to the acetylglutamate kinase family. ArgB subfamily.

Its subcellular location is the cytoplasm. It carries out the reaction N-acetyl-L-glutamate + ATP = N-acetyl-L-glutamyl 5-phosphate + ADP. It participates in amino-acid biosynthesis; L-arginine biosynthesis; N(2)-acetyl-L-ornithine from L-glutamate: step 2/4. Functionally, catalyzes the ATP-dependent phosphorylation of N-acetyl-L-glutamate. This is Acetylglutamate kinase from Chloroflexus aurantiacus (strain ATCC 29366 / DSM 635 / J-10-fl).